Here is a 312-residue protein sequence, read N- to C-terminus: uncharacterized protein (312 aa).

This is an uncharacterized protein from Escherichia coli (strain K12).